The chain runs to 81 residues: Cell division protein ZapB (81 aa).

Positions 5–81 form a coiled coil; sequence LEVFEKLESK…QALLGRMEEV (77 aa). A disordered region spans residues 43–64; that stretch reads VQSAQHGREELERENSQLKEQQ. The segment covering 48–59 has biased composition (basic and acidic residues); that stretch reads HGREELERENSQ.

Belongs to the ZapB family. Homodimer. The ends of the coiled-coil dimer bind to each other, forming polymers. Interacts with FtsZ.

It is found in the cytoplasm. Its function is as follows. Non-essential, abundant cell division factor that is required for proper Z-ring formation. It is recruited early to the divisome by direct interaction with FtsZ, stimulating Z-ring assembly and thereby promoting cell division earlier in the cell cycle. Its recruitment to the Z-ring requires functional FtsA or ZipA. This is Cell division protein ZapB from Klebsiella pneumoniae subsp. pneumoniae (strain ATCC 700721 / MGH 78578).